A 173-amino-acid chain; its full sequence is Globin, cuticular isoform (173 aa).

The signal sequence occupies residues 1 to 16; it reads MLWFVAVCFAIASVSA. In terms of domain architecture, Globin spans 17 to 166; the sequence is MSPADVKKHT…FNSEAQHQLE (150 aa). Histidine 113 lines the heme b pocket.

This sequence belongs to the globin family. As to expression, expressed only by adult nematodes in the gut.

It localises to the secreted. The protein localises to the extracellular space. The protein is Globin, cuticular isoform (GLBC) of Nippostrongylus brasiliensis (Rat hookworm).